We begin with the raw amino-acid sequence, 114 residues long: Probable gas vesicle protein J2 (114 aa).

Residues 1-10 (MTDLDHRYPG) are compositionally biased toward basic and acidic residues. Residues 1 to 21 (MTDLDHRYPGEETEPYGPPSG) form a disordered region.

This sequence belongs to the gas vesicle GvpA family. Interacts with GvpA.

It localises to the gas vesicle. In terms of biological role, a minor component of the gas vesicle, might be involved in nucleating gas vesicle formation. Gas vesicles (GV) are hollow, gas filled proteinaceous nanostructures. It is not clear what function GVs perform in soil bacteria. This Streptomyces coelicolor (strain ATCC BAA-471 / A3(2) / M145) protein is Probable gas vesicle protein J2.